Reading from the N-terminus, the 322-residue chain is MSEQNTFSSPEHITVLLHEAVDGLALKDKGIYIDGTFGRGGHSRLILSKLTENGRLIAIDRDPRAIAAAEEIQDSRFHIEHNSFSAIPYICEKLGLVGKIDGILLDLGVSSPQLDDAERGFSFMKDGPLDMRMDTSKGLSAAQWLQQVTEEDLAWVLKTFGEERFAKRIAHAIVNYNKSAVQNGTEPLTRTLPLAELIAQAVPFKDKHKHPATRSFQAIRIFINSELDELESVLHSALTVLAPEGRLSVISFHSLEDRMVKHFMRKQSKGESIPKGLPLREDQINRNRTLKVIGKAIQPKESEVFANPRSRSAVLRVAERIG.

S-adenosyl-L-methionine-binding positions include 40–42, aspartate 60, phenylalanine 84, aspartate 106, and glutamine 113; that span reads GGH.

Belongs to the methyltransferase superfamily. RsmH family.

The protein resides in the cytoplasm. It carries out the reaction cytidine(1402) in 16S rRNA + S-adenosyl-L-methionine = N(4)-methylcytidine(1402) in 16S rRNA + S-adenosyl-L-homocysteine + H(+). Its function is as follows. Specifically methylates the N4 position of cytidine in position 1402 (C1402) of 16S rRNA. In Mannheimia succiniciproducens (strain KCTC 0769BP / MBEL55E), this protein is Ribosomal RNA small subunit methyltransferase H.